Here is a 2647-residue protein sequence, read N- to C-terminus: MSSSHSRAGQSAAGAAPGGGVDTRDAEMPATEKDLAEDAPWKKIQQNTFTRWCNEHLKCVSKRIANLQTDLSDGLRLIALLEVLSQKKMHRKHNQRPTFRQMQLENVSVALEFLDRESIKLVSIDSKAIVDGNLKLILGLIWTLILHYSISMPMWDEEEDEEAKKQTPKQRLLGWIQNKLPQLPITNFSRDWQSGRALGALVDSCAPGLCPDWDSWDASKPVTNAREAMQQADDWLGIPQVITPEEIVDPNVDEHSVMTYLSQFPKAKLKPGAPLRPKLNPKKARAYGPGIEPTGNMVKKRAEFTVETRSAGQGEVLVYVEDPAGHQEEAKVTANNDKNRTFSVWYVPEVTGTHKVTVLFAGQHIAKSPFEVYVDKSQGDASKVTAQGPGLEPSGNIANKTTYFEIFTAGAGTGEVEVVIQDPMGQKGTVEPQLEARGDSTYRCSYQPTMEGVHTVHVTFAGVPIPRSPYTVTVGQACNPSACRAVGRGLQPKGVRVKETADFKVYTKGAGSGELKVTVKGPKGEERVKQKDLGDGVYGFEYYPMVPGTYIVTITWGGQNIGRSPFEVKVGTECGNQKVRAWGPGLEGGVVGKSADFVVEAIGDDVGTLGFSVEGPSQAKIECDDKGDGSCDVRYWPQEAGEYAVHVLCNSEDIRLSPFMADIRDAPQDFHPDRVKARGPGLEKTGVAVNKPAEFTVDAKHGGKAPLRVQVQDNEGCPVEALVKDNGNGTYSCSYVPRKPVKHTAMVSWGGVSIPNSPFRVNVGAGSHPNKVKVYGPGVAKTGLKAHEPTYFTVDCAEAGQGDVSIGIKCAPGVVGPAEADIDFDIIRNDNDTFTVKYTPRGAGSYTIMVLFADQATPTSPIRVKVEPSHDASKVKAEGPGLSRTGVELGKPTHFTVNAKAAGKGKLDVQFSGLTKGDAVRDVDIIDHHDNTYTVKYTPVQQGPVGVNVTYGGDPIPKSPFSVAVSPSLDLSKIKVSGLGEKVDVGKDQEFTVKSKGAGGQGKVASKIVGPSGAAVPCKVEPGLGADNSVVRFLPREEGPYEVEVTYDGVPVPGSPFPLEAVAPTKPSKVKAFGPGLQGGSAGSPARFTIDTKGAGTGGLGLTVEGPCEAQLECLDNGDGTCSVSYVPTEPGDYNINILFADTHIPGSPFKAHVVPCFDASKVKCSGPGLERATAGEVGQFQVDCSSAGSAELTIEICSEAGLPAEVYIQDHGDGTHTITYIPLCPGAYTVTIKYGGQPVPNFPSKLQVEPAVDTSGVQCYGPGIEGQGVFREATTEFSVDARALTQTGGPHVKARVANPSGNLTETYVQDRGDGMYKVEYTPYEEGLHSVDVTYDGSPVPSSPFQVPVTEGCDPSRVRVHGPGIQSGTTNKPNKFTVETRGAGTGGLGLAVEGPSEAKMSCMDNKDGSCSVEYIPYEAGTYSLNVTYGGHQVPGSPFKVPVHDVTDASKVKCSGPGLSPGMVRANLPQSFQVDTSKAGVAPLQVKVQGPKGLVEPVDVVDNADGTQTVNYVPSREGPYSISVLYGDEEVPRSPFKVKVLPTHDASKVKASGPGLNTTGVPASLPVEFTIDAKDAGEGLLAVQITDPEGKPKKTHIQDNHDGTYTVAYVPDVTGRYTILIKYGGDEIPFSPYRVRAVPTGDASKCTVTVSIGGHGLGAGIGPTIQIGEETVITVDTKAAGKGKVTCTVCTPDGSEVDVDVVENEDGTFDIFYTAPQPGKYVICVRFGGEHVPNSPFQVTALAGDQPSVQPPLRSQQLAPQYTYAQGGQQTWAPERPLVGVNGLDVTSLRPFDLVIPFTIKKGEITGEVRMPSGKVAQPTITDNKDGTVTVRYAPSEAGLHEMDIRYDNMHIPGSPLQFYVDYVNCGHVTAYGPGLTHGVVNKPATFTVNTKDAGEGGLSLAIEGPSKAEISCTDNQDGTCSVSYLPVLPGDYSILVKYNEQHVPGSPFTARVTGDDSMRMSHLKVGSAADIPINISETDLSLLTATVVPPSGREEPCLLKRLRNGHVGISFVPKETGEHLVHVKKNGQHVASSPIPVVISQSEIGDASRVRVSGQGLHEGHTFEPAEFIIDTRDAGYGGLSLSIEGPSKVDINTEDLEDGTCRVTYCPTEPGNYIINIKFADQHVPGSPFSVKVTGEGRVKESITRRRRAPSVANVGSHCDLSLKIPEISIQDMTAQVTSPSGKTHEAEIVEGENHTYCIRFVPAEMGTHTVSVKYKGQHVPGSPFQFTVGPLGEGGAHKVRAGGPGLERAEAGVPAEFSIWTREAGAGGLAIAVEGPSKAEISFEDRKDGSCGVAYVVQEPGDYEVSVKFNEEHIPDSPFVVPVASPSGDARRLTVSSLQESGLKVNQPASFAVSLNGAKGAIDAKVHSPSGALEECYVTEIDQDKYAVRFIPRENGVYLIDVKFNGTHIPGSPFKIRVGEPGHGGDPGLVSAYGAGLEGGVTGNPAEFVVNTSNAGAGALSVTIDGPSKVKMDCQECPEGYRVTYTPMAPGSYLISIKYGGPYHIGGSPFKAKVTGPRLVSNHSLHETSSVFVDSLTKATCAPQHGAPGPGPADASKVVAKGLGLSKAYVGQKSSFTVDCSKAGNNMLLVGVHGPRTPCEEILVKHVGSRLYSVSYLLKDKGEYTLVVKWGDEHIPGSPYRVVVP.

Low complexity predominate over residues 1 to 15 (MSSSHSRAGQSAAGA). Residues 1-39 (MSSSHSRAGQSAAGAAPGGGVDTRDAEMPATEKDLAEDA) form a disordered region. Serine 2 carries the N-acetylserine modification. The segment at 2–274 (SSSHSRAGQS…PKAKLKPGAP (273 aa)) is actin-binding. Position 11 is a phosphoserine (serine 11). A compositionally biased stretch (basic and acidic residues) spans 22 to 39 (DTRDAEMPATEKDLAEDA). Glycyl lysine isopeptide (Lys-Gly) (interchain with G-Cter in ubiquitin) cross-links involve residues lysine 42, lysine 43, and lysine 135. Calponin-homology (CH) domains follow at residues 43–149 (KIQQ…LHYS) and 166–269 (QTPK…KAKL). Residues 271-294 (PGAPLRPKLNPKKARAYGPGIEPT) form a disordered region. 15 Filamin repeats span residues 276–374 (RPKL…EVYV), 376–474 (KSQG…TVTV), 475–570 (GQAC…EVKV), 571–663 (GTEC…MADI), 667–763 (PQDF…RVNV), 764–866 (GAGS…RVKV), 867–965 (EPSH…SVAV), 966–1061 (SPSL…PLEA), 1062–1154 (VAPT…KAHV), 1155–1249 (VPCF…KLQV), 1250–1349 (EPAV…QVPV), 1350–1442 (TEGC…KVPV), 1443–1539 (HDVT…KVKV), 1540–1636 (LPTH…RVRA), and 1649–1740 (VSIG…QVTA). Residue lysine 299 forms a Glycyl lysine isopeptide (Lys-Gly) (interchain with G-Cter in SUMO1); alternate linkage. Lysine 299 participates in a covalent cross-link: Glycyl lysine isopeptide (Lys-Gly) (interchain with G-Cter in SUMO2); alternate. Residues lysine 376 and lysine 508 each carry the N6-acetyllysine modification. N6-acetyllysine occurs at positions 700, 781, 837, 865, and 906. Phosphoserine occurs at positions 968 and 1055. Lysine 1071 carries the N6-acetyllysine; alternate modification. Lysine 1071 carries the post-translational modification N6-succinyllysine; alternate. 2 positions are modified to phosphoserine: serine 1081 and serine 1084. Phosphothreonine is present on threonine 1089. 2 positions are modified to phosphoserine: serine 1301 and serine 1338. The disordered stretch occupies residues 1361–1382 (HGPGIQSGTTNKPNKFTVETRG). Lysine 1372 carries the N6-acetyllysine modification. Phosphoserine is present on residues serine 1459 and serine 1533. The segment at 1490–1607 (PKGLVEPVDV…DNHDGTYTVA (118 aa)) is interaction with furin. Lysine 1538 bears the N6-acetyllysine mark. Residues serine 1630 and serine 1734 each carry the phosphoserine modification. The interval 1741 to 1778 (LAGDQPSVQPPLRSQQLAPQYTYAQGGQQTWAPERPLV) is hinge 1. Filamin repeat units follow at residues 1779-1860 (GVNG…QFYV), 1861-1950 (DYVN…PFTA), 1951-2039 (RVTG…PVVI), 2042-2131 (SEIG…SPFS), 2132-2230 (VKVT…QFTV), 2233-2325 (LGEG…VVPV), 2327-2420 (SPSG…KIRV), and 2424-2516 (GHGG…KAKV). At serine 1835 the chain carries Phosphoserine. A phosphoserine mark is found at serine 1967, serine 2053, serine 2128, serine 2152, serine 2158, serine 2163, serine 2180, serine 2284, serine 2327, and serine 2329. Threonine 2336 is modified (phosphothreonine). A phosphoserine mark is found at serine 2338, serine 2370, serine 2414, serine 2510, serine 2523, and serine 2526. A hinge 2 region spans residues 2517–2551 (TGPRLVSNHSLHETSSVFVDSLTKATCAPQHGAPG). The segment at 2517 to 2647 (TGPRLVSNHS…PGSPYRVVVP (131 aa)) is self-association site, tail. Residues 2552–2646 (PGPADASKVV…IPGSPYRVVV (95 aa)) form a Filamin 24 repeat. Lysine 2569 is modified (N6-acetyllysine; alternate). Position 2569 is an N6-succinyllysine; alternate (lysine 2569). Position 2575 is an N6-acetyllysine (lysine 2575). Residue threonine 2599 is modified to Phosphothreonine. 2 positions are modified to N6-acetyllysine: lysine 2607 and lysine 2621.

This sequence belongs to the filamin family. As to quaternary structure, homodimer. Interacts with PDLIM2. Interacts with RFLNA and RFLNB. Interacts with FCGR1A, FLNB, FURIN, HSPB7, INPPL1, KCND2, MYOT, MYOZ1, ARHGAP24, PSEN1, PSEN2 and ECSCR. Also interacts with various other binding partners in addition to filamentous actin. Interacts (via N-terminus) with MIS18BP1 (via N-terminus). Interacts (via N-terminus) with TAF1B. Interacts with TMEM67 (via C-terminus) and MKS1. Interacts (via actin-binding domain) with MICALL2 (via CH domain). Interacts (via filamin repeat 5) with SYK; docks SYK to the plasma membrane. Interacts (via filamin repeats 19 and 21) with DRD3; increased PKA-mediated phosphorylation at Ser-2152. Interacts (via filamin repeat 21) with MAS1, AGTR1 and ADRA1D; increases PKA-mediated phosphorylation of FLNA at Ser-2152. Interacts (via filamin repeats 4, 9, 12, 17, 19, 21, and 23) with GP1BA (high affinity), ITGB7, ITGB2 and FBLIM1. Interacts with CEACAM1 (via cytoplasmic domain); inhibits cell migration and cell scattering by interfering with the interaction between FLNA and RALA. Interacts with FOXC1. Interacts (via calponin-homology (CH) domain 1 and filamin repeat 24) with CRMP1; the interaction alters FLNA ternary structure and thus promotes FLNA dissociation from F-actin. Interacts with DPYSL3/CRMP3 and DPYSL4/CRMP4. In terms of assembly, interacts with integrin ITGB1 isoform 1/beta-1A and isoform 5/beta-1D. Interacts with LUZP1; the interaction is not necessary for colocalization of LUZP1 with F-actin. In terms of processing, phosphorylation at Ser-2152 is negatively regulated by the autoinhibited conformation of filamin repeats 19-21. Ligand binding induces a conformational switch triggering phosphorylation at Ser-2152 by PKA. Phosphorylation extent changes in response to cell activation. Post-translationally, polyubiquitination in the CH1 domain by a SCF-like complex containing ASB2 leads to proteasomal degradation. Prior dissociation from actin may be required to expose the target lysines. Ubiquitinated in endothelial cells by RNF213 downstream of the non-canonical Wnt signaling pathway, leading to its degradation by the proteasome. As to expression, ubiquitous.

It localises to the cytoplasm. Its subcellular location is the cell cortex. It is found in the cytoskeleton. The protein resides in the perikaryon. The protein localises to the cell projection. It localises to the growth cone. Its subcellular location is the podosome. Promotes orthogonal branching of actin filaments and links actin filaments to membrane glycoproteins. Anchors various transmembrane proteins to the actin cytoskeleton and serves as a scaffold for a wide range of cytoplasmic signaling proteins. Interaction with FLNB may allow neuroblast migration from the ventricular zone into the cortical plate. Tethers cell surface-localized furin, modulates its rate of internalization and directs its intracellular trafficking. Involved in ciliogenesis. Plays a role in cell-cell contacts and adherens junctions during the development of blood vessels, heart and brain organs. Plays a role in platelets morphology through interaction with SYK that regulates ITAM- and ITAM-like-containing receptor signaling, resulting in by platelet cytoskeleton organization maintenance. During the axon guidance process, required for growth cone collapse induced by SEMA3A-mediated stimulation of neurons. This is Filamin-A (FLNA) from Homo sapiens (Human).